The sequence spans 214 residues: uncharacterized protein (214 aa).

Catalysis depends on Y129, which acts as the Proton acceptor.

Belongs to the NAD(P)-dependent epimerase/dehydratase family.

This is an uncharacterized protein from Bacillus subtilis (strain 168).